A 231-amino-acid chain; its full sequence is Translin-associated protein X homolog (231 aa).

This sequence belongs to the translin family.

Its subcellular location is the cytoplasm. The protein localises to the nucleus. This chain is Translin-associated protein X homolog, found in Schizosaccharomyces pombe (strain 972 / ATCC 24843) (Fission yeast).